Consider the following 309-residue polypeptide: G-protein coupled receptor 35 (309 aa).

Over 1–24 (MNGTYNTCGSSDLTWPPAIKLGFY) the chain is Extracellular. An N-linked (GlcNAc...) asparagine glycan is attached at asparagine 2. A helical transmembrane segment spans residues 25-45 (AYLGVLLVLGLLLNSLALWVF). At 46-56 (CCRMQQWTETR) the chain is on the cytoplasmic side. A helical transmembrane segment spans residues 57 to 77 (IYMTNLAVADLCLLCTLPFVL). The Extracellular portion of the chain corresponds to 78–90 (HSLRDTSDTPLCQ). Cysteines 89 and 162 form a disulfide. The chain crosses the membrane as a helical span at residues 91–112 (LSQGIYLTNRYMSISLVTAIAV). Topologically, residues 113 to 135 (DRYVAVRHPLRARGLRSPRQAAA) are cytoplasmic. Residues 136 to 156 (VCAVLWVLVIGSLVARWLLGI) traverse the membrane as a helical segment. Residues 157–174 (QEGGFCFRSTRHNFNSMA) are Extracellular-facing. A helical transmembrane segment spans residues 175-195 (FPLLGFYLPLAVVVFCSLKVV). The Cytoplasmic portion of the chain corresponds to 196 to 218 (TALAQRPPTDVGQAEATRKAARM). Residues 219–239 (VWANLLVFVVCFLPLHVGLTV) form a helical membrane-spanning segment. Topologically, residues 240–258 (RLAVGWNACALLETIRRAL) are extracellular. The helical transmembrane segment at 259 to 279 (YITSKLSDANCCLDAICYYYM) threads the bilayer. Over 280–309 (AKEFQEASALAVAPSAKAHKSQDSLCVTLA) the chain is Cytoplasmic. Phosphoserine is present on residues serine 287 and serine 294. Serine 300 and serine 303 each carry phosphoserine; by GRK5 and GRK6. Threonine 307 bears the Phosphothreonine mark.

It belongs to the G-protein coupled receptor 1 family. As to quaternary structure, interacts with GNA13. Interacts with ARRB2. Post-translationally, multiply phosphorylated in clusters of serines and threonines in the C-terminal tail. Phosphorylation of Ser-300 and Ser-303 is mediated by GRK5 and/or GRK6. As to expression, predominantly expressed in immune and gastrointestinal tissues.

It is found in the cell membrane. G-protein coupled receptor that binds to several ligands including the tryptophan metabolite kynurenic acid (KYNA), lysophosphatidic acid (LPA) or 5-hydroxyindoleacetic acid (5-HIAA) with high affinity, leading to rapid and transient activation of numerous intracellular signaling pathways. Plays a role in neutrophil recruitment to sites of inflammation and bacterial clearance through the major serotonin metabolite 5-HIAA that acts as a physiological ligand. Stimulates lipid metabolism, thermogenic, and anti-inflammatory gene expression in adipose tissue once activated by kynurenic acid. In macrophages, activation by lysophosphatidic acid promotes GPR35-induced signaling with a distinct transcriptional profile characterized by TNF production associated with ERK and NF-kappa-B activation. In turn, induces chemotaxis of macrophages. The polypeptide is G-protein coupled receptor 35 (GPR35) (Homo sapiens (Human)).